The sequence spans 94 residues: uncharacterized protein (94 aa).

Functionally, could be a silencing control element for the regulation of the restriction system. This is an uncharacterized protein from Herpetosiphon aurantiacus (Herpetosiphon giganteus).